Reading from the N-terminus, the 250-residue chain is Cobalt transport protein CbiM (250 aa).

Residues 1 to 24 (MKYWGTALLGAFCVFFFTPNTAYA) form the signal peptide. Helical transmembrane passes span 32 to 52 (LPAG…FWGI), 67 to 87 (MLLG…IPSV), 99 to 119 (LGAI…VLLF), 122 to 142 (LLLA…MGVM), 161 to 181 (VAVF…TSLQ), and 203 to 223 (IFAI…VFVF).

The protein belongs to the CbiM family. As to quaternary structure, forms an energy-coupling factor (ECF) transporter complex composed of an ATP-binding protein (A component, CbiO), a transmembrane protein (T component, CbiQ) and 2 possible substrate-capture proteins (S components, CbiM and CbiN) of unknown stoichimetry.

Its subcellular location is the cell membrane. It functions in the pathway cofactor biosynthesis; adenosylcobalamin biosynthesis. Its function is as follows. Part of the energy-coupling factor (ECF) transporter complex CbiMNOQ involved in cobalt import. This chain is Cobalt transport protein CbiM, found in Desulforamulus reducens (strain ATCC BAA-1160 / DSM 100696 / MI-1) (Desulfotomaculum reducens).